The chain runs to 102 residues: Monothiol glutaredoxin-S4 (102 aa).

The 101-residue stretch at 1–101 (MDKLQKMISE…PMLKRVGALW (101 aa)) folds into the Glutaredoxin domain. Residue Cys21 coordinates [2Fe-2S] cluster. Positions 99–102 (ALWL) match the Responsive for interaction with TGA factors motif.

Belongs to the glutaredoxin family. CC-type subfamily.

It is found in the cytoplasm. Its subcellular location is the nucleus. In terms of biological role, may only reduce GSH-thiol disulfides, but not protein disulfides. In Arabidopsis thaliana (Mouse-ear cress), this protein is Monothiol glutaredoxin-S4 (GRXS4).